The primary structure comprises 135 residues: ATP synthase epsilon chain (135 aa).

Belongs to the ATPase epsilon chain family. In terms of assembly, F-type ATPases have 2 components, CF(1) - the catalytic core - and CF(0) - the membrane proton channel. CF(1) has five subunits: alpha(3), beta(3), gamma(1), delta(1), epsilon(1). CF(0) has three main subunits: a, b and c.

It localises to the cell inner membrane. Functionally, produces ATP from ADP in the presence of a proton gradient across the membrane. This Allorhizobium ampelinum (strain ATCC BAA-846 / DSM 112012 / S4) (Agrobacterium vitis (strain S4)) protein is ATP synthase epsilon chain.